The chain runs to 571 residues: Proline--tRNA ligase (571 aa).

The protein belongs to the class-II aminoacyl-tRNA synthetase family. ProS type 1 subfamily. Homodimer.

The protein localises to the cytoplasm. The enzyme catalyses tRNA(Pro) + L-proline + ATP = L-prolyl-tRNA(Pro) + AMP + diphosphate. Functionally, catalyzes the attachment of proline to tRNA(Pro) in a two-step reaction: proline is first activated by ATP to form Pro-AMP and then transferred to the acceptor end of tRNA(Pro). As ProRS can inadvertently accommodate and process non-cognate amino acids such as alanine and cysteine, to avoid such errors it has two additional distinct editing activities against alanine. One activity is designated as 'pretransfer' editing and involves the tRNA(Pro)-independent hydrolysis of activated Ala-AMP. The other activity is designated 'posttransfer' editing and involves deacylation of mischarged Ala-tRNA(Pro). The misacylated Cys-tRNA(Pro) is not edited by ProRS. The sequence is that of Proline--tRNA ligase from Shewanella baltica (strain OS195).